The primary structure comprises 296 residues: CRISPR-associated endonuclease Cas1 2 (296 aa).

3 residues coordinate Mn(2+): Glu-157, His-224, and Asp-237.

It belongs to the CRISPR-associated endonuclease Cas1 family. In terms of assembly, homodimer, forms a heterotetramer with a Cas2 homodimer. Requires Mg(2+) as cofactor. Mn(2+) is required as a cofactor.

CRISPR (clustered regularly interspaced short palindromic repeat), is an adaptive immune system that provides protection against mobile genetic elements (viruses, transposable elements and conjugative plasmids). CRISPR clusters contain spacers, sequences complementary to antecedent mobile elements, and target invading nucleic acids. CRISPR clusters are transcribed and processed into CRISPR RNA (crRNA). Acts as a dsDNA endonuclease. Involved in the integration of spacer DNA into the CRISPR cassette. This is CRISPR-associated endonuclease Cas1 2 from Chlorobaculum tepidum (strain ATCC 49652 / DSM 12025 / NBRC 103806 / TLS) (Chlorobium tepidum).